Reading from the N-terminus, the 220-residue chain is Ribose-5-phosphate isomerase A (220 aa).

Residues 28–31 (TGST), 81–84 (DGAD), and 94–97 (KGGG) each bind substrate. Catalysis depends on Glu-103, which acts as the Proton acceptor. Residue Lys-121 participates in substrate binding.

The protein belongs to the ribose 5-phosphate isomerase family. As to quaternary structure, homodimer.

The enzyme catalyses aldehydo-D-ribose 5-phosphate = D-ribulose 5-phosphate. It participates in carbohydrate degradation; pentose phosphate pathway; D-ribose 5-phosphate from D-ribulose 5-phosphate (non-oxidative stage): step 1/1. Catalyzes the reversible conversion of ribose-5-phosphate to ribulose 5-phosphate. This Shewanella sp. (strain W3-18-1) protein is Ribose-5-phosphate isomerase A.